Reading from the N-terminus, the 191-residue chain is dCTP deaminase (191 aa).

Residues 112 to 117, 136 to 138, Gln157, Tyr173, and Gln183 each bind dCTP; these read KSTYAR and TLE. The active-site Proton donor/acceptor is the Glu138.

Belongs to the dCTP deaminase family. In terms of assembly, homotrimer.

The enzyme catalyses dCTP + H2O + H(+) = dUTP + NH4(+). The protein operates within pyrimidine metabolism; dUMP biosynthesis; dUMP from dCTP (dUTP route): step 1/2. Catalyzes the deamination of dCTP to dUTP. This chain is dCTP deaminase, found in Psychrobacter arcticus (strain DSM 17307 / VKM B-2377 / 273-4).